Consider the following 1023-residue polypeptide: 2-oxoglutarate dehydrogenase complex component E1 (1023 aa).

The transit peptide at 1 to 40 (MFHLRTCAAKLRPLTASQTVKTFSQNRPAAARTFQQIRCY) directs the protein to the mitochondrion. Lys74 is modified (N6-succinyllysine). Ser100 carries the post-translational modification Phosphoserine. Residues His143, Asp156, and Asp158 each coordinate Ca(2+). Arg312 contributes to the thiamine diphosphate binding site. Position 401 is an N6-acetyllysine (Lys401). 3 residues coordinate thiamine diphosphate: Asp411, Asn444, and Ile446. Asp411, Asn444, and Ile446 together coordinate Mg(2+). Lys534 participates in a covalent cross-link: Glycyl lysine isopeptide (Lys-Gly) (interchain with G-Cter in ubiquitin). Position 564 is an N6-succinyllysine (Lys564). Gln676 contributes to the thiamine diphosphate binding site. At Lys970 the chain carries N6-acetyllysine.

Belongs to the alpha-ketoglutarate dehydrogenase family. In terms of assembly, homodimer. The 2-oxoglutarate dehydrogenase complex is composed of OGDH (2-oxoglutarate dehydrogenase; E1), DLST (dihydrolipoamide succinyltransferase; E2), DLD (dihydrolipoamide dehydrogenase; E3), and the assembly factor KGD4. It contains multiple copies of the three enzymatic components (E1, E2 and E3). In the nucleus, the 2-oxoglutarate dehydrogenase complex associates with KAT2A. Interacts with ABHD11; this interaction maintains the functional lipoylation of the 2-oxoglutarate dehydrogenase complex. It depends on thiamine diphosphate as a cofactor. The cofactor is Mg(2+).

It is found in the mitochondrion. The protein resides in the nucleus. The enzyme catalyses N(6)-[(R)-lipoyl]-L-lysyl-[protein] + 2-oxoglutarate + H(+) = N(6)-[(R)-S(8)-succinyldihydrolipoyl]-L-lysyl-[protein] + CO2. With respect to regulation, calcium ions and ADP stimulate, whereas ATP and NADH reduce catalytic activity. Its function is as follows. 2-oxoglutarate dehydrogenase (E1o) component of the 2-oxoglutarate dehydrogenase complex (OGDHC). Participates in the first step, rate limiting for the overall conversion of 2-oxoglutarate to succinyl-CoA and CO(2) catalyzed by the whole OGDHC. Catalyzes the irreversible decarboxylation of 2-oxoglutarate (alpha-ketoglutarate) via the thiamine diphosphate (ThDP) cofactor and subsequent transfer of the decarboxylated acyl intermediate on an oxidized dihydrolipoyl group that is covalently amidated to the E2 enzyme (dihydrolipoyllysine-residue succinyltransferase or DLST). Plays a key role in the Krebs (citric acid) cycle, which is a common pathway for oxidation of fuel molecules, including carbohydrates, fatty acids, and amino acids. Can catalyze the decarboxylation of 2-oxoadipate in vitro, but at a much lower rate than 2-oxoglutarate. Mainly active in the mitochondrion. A fraction of the 2-oxoglutarate dehydrogenase complex also localizes in the nucleus and is required for lysine succinylation of histones: associates with KAT2A on chromatin and provides succinyl-CoA to histone succinyltransferase KAT2A. This chain is 2-oxoglutarate dehydrogenase complex component E1, found in Homo sapiens (Human).